The sequence spans 87 residues: U3-theraphotoxin-Hhn1a 3 (87 aa).

An N-terminal signal peptide occupies residues 1-24 (MVNMKASMFLTFAGLVLLFVVCYA). A propeptide spanning residues 25–52 (PESEEKEFPKEMLSSIFAVDNDFKQEER) is cleaved from the precursor. 3 disulfide bridges follow: Cys-54-Cys-67, Cys-61-Cys-72, and Cys-66-Cys-79.

Belongs to the neurotoxin 10 (Hwtx-1) family. 51 (Hntx-8) subfamily. Hntx-8 sub-subfamily. As to expression, expressed by the venom gland.

The protein resides in the secreted. In terms of biological role, ion channel inhibitor. This is U3-theraphotoxin-Hhn1a 3 from Cyriopagopus hainanus (Chinese bird spider).